The following is a 1232-amino-acid chain: Protein transport protein sec-16A.1 (1232 aa).

Disordered stretches follow at residues 18 to 134 (GASG…SGYA), 172 to 193 (RNGFVYDSGESDKTSEELEEDE), 815 to 843 (PVQESQQHVPQPQPVENKSISSEAKKWHD), 866 to 942 (KPIA…VVPE), 972 to 1069 (QPIP…PQKQ), and 1140 to 1232 (PHLM…QNND). Positions 26–37 (DWNNPYNASPPS) are enriched in polar residues. The span at 67-76 (RPILIQPARP) shows a compositional bias: low complexity. Residues 78 to 100 (SQKSNRQGTGMSNGSRGLNSTFN) show a composition bias toward polar residues. Residues 817-836 (QESQQHVPQPQPVENKSISS) are compositionally biased toward polar residues. Low complexity predominate over residues 896–914 (SSVTVAASASRTSTLTSST). Polar residues-rich tracts occupy residues 1046–1060 (QQATLGQASIPNAKT), 1149–1159 (SNKSSTNSLRS), and 1168–1178 (YLQSGMATSQA). Positions 1194–1203 (PMSFSFMPAP) are enriched in low complexity. Residues 1222 to 1232 (PSESLSKQNND) are compositionally biased toward polar residues.

The protein belongs to the SEC16 family. As to quaternary structure, interacts with tfg-1 (via N-terminus); the interaction is direct and is required for both the localization of tfg-1 and to maintain the distribution of sec-16A.1 at endoplasmic reticulum exit sites (ERES).

It is found in the endoplasmic reticulum. Its subcellular location is the endoplasmic reticulum-Golgi intermediate compartment. In terms of biological role, plays a role in the organization of the endoplasmic reticulum exit sites (ERES), also known as transitional endoplasmic reticulum (tER). In association with tfg-1, accumulates at ERES to positively regulate secretory cargo trafficking from the endoplasmic reticulum to the endoplasmic reticulum-Golgi intermediate compartment (ERGIC) and Golgi apparatus. The chain is Protein transport protein sec-16A.1 from Caenorhabditis elegans.